We begin with the raw amino-acid sequence, 108 residues long: Putative lipid-binding protein AIR1B (108 aa).

An N-terminal signal peptide occupies residues 1–23; it reads MAPRTSLALFVSLNLLFFTCTSA. Cystine bridges form between Cys28-Cys55, Cys35-Cys54, and Cys71-Cys107.

This sequence belongs to the plant LTP family. PEARLI1 subfamily.

It is found in the secreted. The protein is Putative lipid-binding protein AIR1B (AIR1B) of Arabidopsis thaliana (Mouse-ear cress).